Here is a 187-residue protein sequence, read N- to C-terminus: Large ribosomal subunit protein uL5 (187 aa).

It belongs to the universal ribosomal protein uL5 family. As to quaternary structure, part of the 50S ribosomal subunit; part of the 5S rRNA/L5/L18/L25 subcomplex. Contacts the 5S rRNA and the P site tRNA. Forms a bridge to the 30S subunit in the 70S ribosome.

Functionally, this is one of the proteins that bind and probably mediate the attachment of the 5S RNA into the large ribosomal subunit, where it forms part of the central protuberance. In the 70S ribosome it contacts protein S13 of the 30S subunit (bridge B1b), connecting the 2 subunits; this bridge is implicated in subunit movement. Contacts the P site tRNA; the 5S rRNA and some of its associated proteins might help stabilize positioning of ribosome-bound tRNAs. The polypeptide is Large ribosomal subunit protein uL5 (Malacoplasma penetrans (strain HF-2) (Mycoplasma penetrans)).